The following is a 207-amino-acid chain: Glycerol-3-phosphate acyltransferase (207 aa).

A run of 6 helical transmembrane segments spans residues tyrosine 7 to valine 27, leucine 58 to leucine 78, valine 83 to phenylalanine 103, leucine 116 to phenylalanine 136, isoleucine 141 to glycine 161, and leucine 166 to isoleucine 186.

This sequence belongs to the PlsY family. As to quaternary structure, probably interacts with PlsX.

It is found in the cell inner membrane. The catalysed reaction is an acyl phosphate + sn-glycerol 3-phosphate = a 1-acyl-sn-glycero-3-phosphate + phosphate. The protein operates within lipid metabolism; phospholipid metabolism. Catalyzes the transfer of an acyl group from acyl-phosphate (acyl-PO(4)) to glycerol-3-phosphate (G3P) to form lysophosphatidic acid (LPA). This enzyme utilizes acyl-phosphate as fatty acyl donor, but not acyl-CoA or acyl-ACP. The chain is Glycerol-3-phosphate acyltransferase from Hyphomonas neptunium (strain ATCC 15444).